The sequence spans 68 residues: Conotoxin ba14a (68 aa).

The signal sequence occupies residues 1–20; sequence MKLSVMFIVALVLSLSMTDG. Residues 21–50 constitute a propeptide that is removed on maturation; the sequence is LPRRAENGGRIFRQHSPDSMDPQTRQIKTR.

Post-translationally, contains 2 disulfide bonds. In terms of tissue distribution, expressed by the venom duct.

Its subcellular location is the secreted. In Conus bayani (Bayan's cone), this protein is Conotoxin ba14a.